The sequence spans 360 residues: Peptide chain release factor 1 (360 aa).

The residue at position 235 (Gln235) is an N5-methylglutamine.

This sequence belongs to the prokaryotic/mitochondrial release factor family. Methylated by PrmC. Methylation increases the termination efficiency of RF1.

It localises to the cytoplasm. Functionally, peptide chain release factor 1 directs the termination of translation in response to the peptide chain termination codons UAG and UAA. This chain is Peptide chain release factor 1, found in Paraburkholderia phymatum (strain DSM 17167 / CIP 108236 / LMG 21445 / STM815) (Burkholderia phymatum).